The primary structure comprises 222 residues: Orotate phosphoribosyltransferase (222 aa).

Lys-29 provides a ligand contact to 5-phospho-alpha-D-ribose 1-diphosphate. Residue 37 to 38 (FF) coordinates orotate. Residues 75 to 76 (YK), Arg-101, Lys-102, Lys-105, His-107, and 126 to 134 (DDVISAGTS) each bind 5-phospho-alpha-D-ribose 1-diphosphate. Positions 130 and 158 each coordinate orotate.

The protein belongs to the purine/pyrimidine phosphoribosyltransferase family. PyrE subfamily. Homodimer. Mg(2+) is required as a cofactor.

The catalysed reaction is orotidine 5'-phosphate + diphosphate = orotate + 5-phospho-alpha-D-ribose 1-diphosphate. It participates in pyrimidine metabolism; UMP biosynthesis via de novo pathway; UMP from orotate: step 1/2. Functionally, catalyzes the transfer of a ribosyl phosphate group from 5-phosphoribose 1-diphosphate to orotate, leading to the formation of orotidine monophosphate (OMP). This chain is Orotate phosphoribosyltransferase, found in Polynucleobacter necessarius subsp. necessarius (strain STIR1).